Here is a 483-residue protein sequence, read N- to C-terminus: L-2-hydroxyglutarate dehydrogenase, mitochondrial (483 aa).

The N-terminal 67 residues, 1–67 (MKHKPETAAF…VDASKTIVRG (67 aa)), are a transit peptide targeting the mitochondrion.

It belongs to the L2HGDH family. It depends on FAD as a cofactor.

Its subcellular location is the mitochondrion. The enzyme catalyses (S)-2-hydroxyglutarate + A = 2-oxoglutarate + AH2. Functionally, catalyzes the oxidation of (S)-2-hydroxyglutarate to 2-oxoglutarate. Is specific for the (S) enantiomer and possesses very poor activity toward (R)-2-hydroxyglutarate. Has no activity toward related 2-hydroxy acids, such as glycolate, L-lactate or D-lactate. This chain is L-2-hydroxyglutarate dehydrogenase, mitochondrial, found in Arabidopsis thaliana (Mouse-ear cress).